A 972-amino-acid polypeptide reads, in one-letter code: Macrophage colony-stimulating factor 1 receptor (972 aa).

Residues Met-1 to Gly-19 form the signal peptide. Topologically, residues Ile-20–Pro-517 are extracellular. Ig-like C2-type domains are found at residues Pro-21–Pro-104, Pro-107–Lys-197, Pro-203–Ser-290, Ala-299–Arg-399, and Pro-402–Ser-502. Disulfide bonds link Cys-42–Cys-84, Cys-127–Cys-177, and Cys-224–Cys-278. N-linked (GlcNAc...) asparagine glycans are attached at residues Asn-45, Asn-73, Asn-153, Asn-240, Asn-275, Asn-302, Asn-335, Asn-353, Asn-412, Asn-428, and Asn-480. A disulfide bridge connects residues Cys-419 and Cys-485. Residues Val-518–Tyr-538 form a helical membrane-spanning segment. Residues Lys-539–Cys-972 lie on the Cytoplasmic side of the membrane. The tract at residues Gln-542–Lys-574 is regulatory juxtamembrane domain. Tyr-546 and Tyr-561 each carry phosphotyrosine; by autocatalysis. The 329-residue stretch at Leu-582–Leu-910 folds into the Protein kinase domain. ATP-binding positions include Leu-588–Val-596 and Lys-616. Phosphotyrosine; by autocatalysis is present on residues Tyr-699 and Tyr-708. A Phosphoserine modification is found at Ser-713. Tyr-723 is subject to Phosphotyrosine; by autocatalysis. Asp-778 serves as the catalytic Proton acceptor. Residues Asp-796–Pro-818 form an activation loop region. 2 positions are modified to phosphotyrosine; by autocatalysis: Tyr-809 and Tyr-923. The tract at residues Arg-918–His-950 is disordered. The span at Ser-928–Ser-940 shows a compositional bias: low complexity. Position 969 is a phosphotyrosine; by autocatalysis (Tyr-969).

The protein belongs to the protein kinase superfamily. Tyr protein kinase family. CSF-1/PDGF receptor subfamily. Interacts with INPPL1/SHIP2 and THOC5. Monomer. Homodimer. Interacts with CSF1 and IL34. Interaction with dimeric CSF1 or IL34 leads to receptor homodimerization. Interacts (tyrosine phosphorylated) with PLCG2 (via SH2 domain). Interacts (tyrosine phosphorylated) with PIK3R1 (via SH2 domain). Interacts (tyrosine phosphorylated) with FYN, YES1 and SRC (via SH2 domain). Interacts (tyrosine phosphorylated) with CBL, GRB2 and SLA2. Post-translationally, autophosphorylated in response to CSF1 or IL34 binding. Phosphorylation at Tyr-561 is important for normal down-regulation of signaling by ubiquitination, internalization and degradation. Phosphorylation at Tyr-561 and Tyr-809 is important for interaction with SRC family members, including FYN, YES1 and SRC, and for subsequent activation of these protein kinases. Phosphorylation at Tyr-699 and Tyr-923 is important for interaction with GRB2. Phosphorylation at Tyr-723 is important for interaction with PIK3R1. Phosphorylation at Tyr-708 is important for normal receptor degradation. Phosphorylation at Tyr-723 and Tyr-809 is important for interaction with PLCG2. Phosphorylation at Tyr-969 is important for interaction with CBL. Dephosphorylation by PTPN2 negatively regulates downstream signaling and macrophage differentiation. In terms of processing, ubiquitinated. Becomes rapidly polyubiquitinated after autophosphorylation, leading to its degradation. As to expression, expressed in bone marrow and in differentiated blood mononuclear cells.

It is found in the cell membrane. It catalyses the reaction L-tyrosyl-[protein] + ATP = O-phospho-L-tyrosyl-[protein] + ADP + H(+). Its activity is regulated as follows. Present in an inactive conformation in the absence of bound ligand. CSF1 or IL34 binding leads to dimerization and activation by autophosphorylation on tyrosine residues. Inhibited by imatinib/STI-571 (Gleevec), dasatinib, sunitinib/SU11248, lestaurtinib/CEP-701, midostaurin/PKC-412, Ki20227, linifanib/ABT-869, Axitinib/AG013736, sorafenib/BAY 43-9006 and GW2580. Tyrosine-protein kinase that acts as a cell-surface receptor for CSF1 and IL34 and plays an essential role in the regulation of survival, proliferation and differentiation of hematopoietic precursor cells, especially mononuclear phagocytes, such as macrophages and monocytes. Promotes the release of pro-inflammatory chemokines in response to IL34 and CSF1, and thereby plays an important role in innate immunity and in inflammatory processes. Plays an important role in the regulation of osteoclast proliferation and differentiation, the regulation of bone resorption, and is required for normal bone and tooth development. Required for normal male and female fertility, and for normal development of milk ducts and acinar structures in the mammary gland during pregnancy. Promotes reorganization of the actin cytoskeleton, regulates formation of membrane ruffles, cell adhesion and cell migration, and promotes cancer cell invasion. Activates several signaling pathways in response to ligand binding, including the ERK1/2 and the JNK pathway. Phosphorylates PIK3R1, PLCG2, GRB2, SLA2 and CBL. Activation of PLCG2 leads to the production of the cellular signaling molecules diacylglycerol and inositol 1,4,5-trisphosphate, that then lead to the activation of protein kinase C family members, especially PRKCD. Phosphorylation of PIK3R1, the regulatory subunit of phosphatidylinositol 3-kinase, leads to activation of the AKT1 signaling pathway. Activated CSF1R also mediates activation of the MAP kinases MAPK1/ERK2 and/or MAPK3/ERK1, and of the SRC family kinases SRC, FYN and YES1. Activated CSF1R transmits signals both via proteins that directly interact with phosphorylated tyrosine residues in its intracellular domain, or via adapter proteins, such as GRB2. Promotes activation of STAT family members STAT3, STAT5A and/or STAT5B. Promotes tyrosine phosphorylation of SHC1 and INPP5D/SHIP-1. Receptor signaling is down-regulated by protein phosphatases, such as INPP5D/SHIP-1, that dephosphorylate the receptor and its downstream effectors, and by rapid internalization of the activated receptor. In the central nervous system, may play a role in the development of microglia macrophages. In Homo sapiens (Human), this protein is Macrophage colony-stimulating factor 1 receptor (CSF1R).